A 341-amino-acid polypeptide reads, in one-letter code: tRNA N6-adenosine threonylcarbamoyltransferase (341 aa).

Fe cation-binding residues include H111 and H115. Substrate-binding positions include 134–138 (LVSGG), D167, G180, and N276. D304 contributes to the Fe cation binding site.

The protein belongs to the KAE1 / TsaD family. It depends on Fe(2+) as a cofactor.

Its subcellular location is the cytoplasm. The catalysed reaction is L-threonylcarbamoyladenylate + adenosine(37) in tRNA = N(6)-L-threonylcarbamoyladenosine(37) in tRNA + AMP + H(+). In terms of biological role, required for the formation of a threonylcarbamoyl group on adenosine at position 37 (t(6)A37) in tRNAs that read codons beginning with adenine. Is involved in the transfer of the threonylcarbamoyl moiety of threonylcarbamoyl-AMP (TC-AMP) to the N6 group of A37, together with TsaE and TsaB. TsaD likely plays a direct catalytic role in this reaction. The sequence is that of tRNA N6-adenosine threonylcarbamoyltransferase from Azotobacter vinelandii (strain DJ / ATCC BAA-1303).